We begin with the raw amino-acid sequence, 97 residues long: Co-chaperonin GroES (97 aa).

It belongs to the GroES chaperonin family. In terms of assembly, heptamer of 7 subunits arranged in a ring. Interacts with the chaperonin GroEL.

It localises to the cytoplasm. In terms of biological role, together with the chaperonin GroEL, plays an essential role in assisting protein folding. The GroEL-GroES system forms a nano-cage that allows encapsulation of the non-native substrate proteins and provides a physical environment optimized to promote and accelerate protein folding. GroES binds to the apical surface of the GroEL ring, thereby capping the opening of the GroEL channel. The chain is Co-chaperonin GroES from Nocardioides sp. (strain ATCC BAA-499 / JS614).